The primary structure comprises 333 residues: D-glutamate N-acetyltransferase (333 aa).

Belongs to the N-acetyltransferase DgcN family.

The catalysed reaction is D-glutamate + acetyl-CoA = N-acetyl-D-glutamate + CoA + H(+). Its pathway is amino-acid degradation. In terms of biological role, N-acetyltransferase involved in a deamination-independent D-glutamate degradation pathway, named the DgcN-DgcA pathway. Catalyzes the transfer of the acetyl moiety from acetyl-CoA to D-glutamate to generate N-acetyl-D-glutamate. This is D-glutamate N-acetyltransferase from Tritonibacter scottomollicae (Epibacterium scottomollicae).